The following is a 137-amino-acid chain: Methylglyoxal synthase (137 aa).

Residues 1 to 137 (MNIALVAHDK…KLSHNDEPPA (137 aa)) form the MGS-like domain. Residues His8, Lys12, 34–37 (TGTT), and 54–55 (SG) contribute to the substrate site. Asp60 (proton donor/acceptor) is an active-site residue. Substrate is bound at residue His87.

The protein belongs to the methylglyoxal synthase family.

The catalysed reaction is dihydroxyacetone phosphate = methylglyoxal + phosphate. Catalyzes the formation of methylglyoxal from dihydroxyacetone phosphate. The polypeptide is Methylglyoxal synthase (Exiguobacterium sp. (strain ATCC BAA-1283 / AT1b)).